A 285-amino-acid chain; its full sequence is MKYVGAHVSAAGGLANAAIRAAEIEATAFALFTKNQRQWRAAPLTPEIINDFKAACEKYNFGPGQILPHDSYLINLGHPVQEALDKSREAFLDELQRCEQLGLTLLNFHPGSHLMQIDEDACLARIAESINIALAQTEGVTAVIENTAGQGSNLGFKFEHLAAIIDGVEDKTRVGVCIDTCHAFAAGYDLRSQEECEKTFAEFERIVGFKYLRGMHLNDAKSAFGSRVDRHHSLGEGNIGHDAFRFIMQDPRFDGIPMVLETVNPDIWAEEIAWLKAQQTAEQAA.

9 residues coordinate Zn(2+): H69, H109, E145, D179, H182, H216, D229, H231, and E261.

This sequence belongs to the AP endonuclease 2 family. Zn(2+) is required as a cofactor.

It catalyses the reaction Endonucleolytic cleavage to 5'-phosphooligonucleotide end-products.. Functionally, endonuclease IV plays a role in DNA repair. It cleaves phosphodiester bonds at apurinic or apyrimidinic (AP) sites, generating a 3'-hydroxyl group and a 5'-terminal sugar phosphate. This Enterobacter sp. (strain 638) protein is Probable endonuclease 4.